Consider the following 615-residue polypeptide: Delta-like protein B (615 aa).

The first 20 residues, Met1–Ser20, serve as a signal peptide directing secretion. Over Ser21–Ala522 the chain is Extracellular. The DSL domain occupies Val159–Cys203. Disulfide bonds link Cys161/Cys170, Cys174/Cys186, Cys194/Cys203, Cys208/Cys219, Cys212/Cys225, Cys227/Cys236, Cys245/Cys250, Cys258/Cys267, Cys274/Cys286, Cys280/Cys296, Cys298/Cys307, Cys314/Cys325, Cys319/Cys334, Cys336/Cys345, Cys352/Cys363, Cys357/Cys373, Cys375/Cys384, Cys391/Cys402, Cys396/Cys411, Cys413/Cys422, Cys429/Cys440, Cys434/Cys449, Cys451/Cys460, Cys467/Cys478, Cys472/Cys487, and Cys489/Cys498. EGF-like domains lie at Ser204–Ser237, His241–Asn268, and Asp270–Glu308. One can recognise an EGF-like 4; calcium-binding domain in the interval Glu310–Glu346. EGF-like domains lie at Ile348–Glu385 and Arg387–Glu423. Residues Asn425–Ser461 form the EGF-like 7; calcium-binding domain. Asn459 carries an N-linked (GlcNAc...) asparagine glycan. The region spanning Arg463–Glu499 is the EGF-like 8 domain. The chain crosses the membrane as a helical span at residues Val523–Leu543. At Arg544–Arg615 the chain is on the cytoplasmic side.

Post-translationally, ubiquitinated by mib, leading to its endocytosis and subsequent degradation.

The protein resides in the membrane. In terms of biological role, acts as a ligand for Notch receptors and is involved in primary neurogenesis. Can activate Notch receptors, thereby playing a key role in lateral inhibition, a process that prevents the immediate neighbors of each nascent neural cell from simultaneously embarking on neural differentiation. The protein is Delta-like protein B (dlb) of Danio rerio (Zebrafish).